The primary structure comprises 617 residues: MSPMARTAPVPAATDPAIIRNFCIIAHIDHGKSTLADRMLQYTGVVKQRDMKAQYLDRMDIERERGITIKSQAVRMPWELDGNSYALNMIDTPGHVDFTYEVSRSLAACEGAVLLVDAAQGIEAQTLANLYLAMENNLTIIPVLNKIDLPAAQPEKYAAELANLIGGDPEDVLKVSGKTGVGVEALLDKIVRDLPAPVGDPNAPARAMIFDSVYDTYRGVVTYVRVVDGMLHPRERIQMMSTRATHELLEIGVSSPEPTPSKGLGVGEVGYLITGVKDVRQSKVGDTVTNLAKPASESLSGYADAKPMVFSGLYPLDGTDYPVLRDALEKLMLNDAALVYEPETSAALGFGFRVGFLGLLHLEITRERLEREYNLDLISTAPNVEYEVTLEDKKVIHVTNPSEYPTGKISEVREPMVSATILAPNEFVGSIMELCQSRRGQMRGMDYLSEDRVELRYWIPLAEIVFDFFDLLKSKTRGYASLDWKADGEQVADLVKVDILLQGEQVDAFSAITHRDKAYAYGVMMTGKLRELIPRQQFEVPIQAAIGSRIIARESIRAIRKDVLAKCYGGDITRKRKLLEKQKEGKKRMKMVGRVEVPQEAFIAALTTDESKDKAKK.

The 182-residue stretch at 17–198 (AIIRNFCIIA…KIVRDLPAPV (182 aa)) folds into the tr-type G domain. Residues 29 to 34 (DHGKST) and 145 to 148 (NKID) each bind GTP.

The protein belongs to the TRAFAC class translation factor GTPase superfamily. Classic translation factor GTPase family. LepA subfamily.

It is found in the cell membrane. The enzyme catalyses GTP + H2O = GDP + phosphate + H(+). Its function is as follows. Required for accurate and efficient protein synthesis under certain stress conditions. May act as a fidelity factor of the translation reaction, by catalyzing a one-codon backward translocation of tRNAs on improperly translocated ribosomes. Back-translocation proceeds from a post-translocation (POST) complex to a pre-translocation (PRE) complex, thus giving elongation factor G a second chance to translocate the tRNAs correctly. Binds to ribosomes in a GTP-dependent manner. The polypeptide is Elongation factor 4 (Paenarthrobacter aurescens (strain TC1)).